The primary structure comprises 352 residues: Photosystem II D2 protein (352 aa).

Over 1-31 the chain is Cytoplasmic; it reads MTIAVGRAPVERGWFDVLDDWLKRDRFVFIG. Residues 32–53 form a helical membrane-spanning segment; it reads WSGLLLFPCAFMALGGWLTGTT. Over 54–108 the chain is Lumenal, thylakoid; the sequence is FVTSWYTHGLASSYLEGANFLTVAVSSPADAFGHSLLFLWGPEAQGNLTRWFQIG. A helical membrane pass occupies residues 109-131; it reads GLWPFVALHGAFGLIGFMLRQFE. Position 117 (His117) interacts with chlorophyll a. Pheophytin a is bound at residue Gln129. Residues 132–140 lie on the Cytoplasmic side of the membrane; sequence ISRLVGIRP. The helical transmembrane segment at 141–162 threads the bilayer; the sequence is YNAIAFSGPIAVFVSVFLMYPL. Asn142 is a binding site for pheophytin a. The Lumenal, thylakoid segment spans residues 163–190; sequence GQSSWFFAPSFGVAGIFRFILFLQGFHN. Residues 191 to 217 traverse the membrane as a helical segment; it reads WTLNPFHMMGVAGILGGALLCAIHGAT. His197 contributes to the chlorophyll a binding site. The a plastoquinone site is built by His214 and Phe261. His214 lines the Fe cation pocket. Over 218–265 the chain is Cytoplasmic; it reads VENTLFEDGEDSNTFRAFEPTQAEETYSMVTANRFWSQIFGIAFSNKR. The helical transmembrane segment at 266-288 threads the bilayer; it reads WLHFFMLFVPVTGLWMSSVGIVG. His268 is a Fe cation binding site. At 289-352 the chain is on the lumenal, thylakoid side; that stretch reads LALNLRAYDF…EEVLPRGNAL (64 aa).

Belongs to the reaction center PufL/M/PsbA/D family. PSII is composed of 1 copy each of membrane proteins PsbA, PsbB, PsbC, PsbD, PsbE, PsbF, PsbH, PsbI, PsbJ, PsbK, PsbL, PsbM, PsbT, PsbX, PsbY, PsbZ, Psb30/Ycf12, peripheral proteins PsbO, CyanoQ (PsbQ), PsbU, PsbV and a large number of cofactors. It forms dimeric complexes. The cofactor is The D1/D2 heterodimer binds P680, chlorophylls that are the primary electron donor of PSII, and subsequent electron acceptors. It shares a non-heme iron and each subunit binds pheophytin, quinone, additional chlorophylls, carotenoids and lipids. There is also a Cl(-1) ion associated with D1 and D2, which is required for oxygen evolution. The PSII complex binds additional chlorophylls, carotenoids and specific lipids..

Its subcellular location is the cellular thylakoid membrane. The catalysed reaction is 2 a plastoquinone + 4 hnu + 2 H2O = 2 a plastoquinol + O2. Photosystem II (PSII) is a light-driven water:plastoquinone oxidoreductase that uses light energy to abstract electrons from H(2)O, generating O(2) and a proton gradient subsequently used for ATP formation. It consists of a core antenna complex that captures photons, and an electron transfer chain that converts photonic excitation into a charge separation. The D1/D2 (PsbA/PsbD) reaction center heterodimer binds P680, the primary electron donor of PSII as well as several subsequent electron acceptors. D2 is needed for assembly of a stable PSII complex. The chain is Photosystem II D2 protein from Synechocystis sp. (strain ATCC 27184 / PCC 6803 / Kazusa).